The chain runs to 313 residues: Type II restriction enzyme BsuMI component YdiR (313 aa).

The interval 289–313 (FVSGDIVDENATTSSDDLPEDFENN) is disordered.

As to quaternary structure, bsuMI restriction activity requires YdiR, YdiS and YdjA.

The enzyme catalyses Endonucleolytic cleavage of DNA to give specific double-stranded fragments with terminal 5'-phosphates.. Its function is as follows. A P subtype restriction enzyme that recognizes the double-stranded sequence 5'-CTCGAG-3'; the cleavage site is unknown. In Bacillus subtilis (strain 168), this protein is Type II restriction enzyme BsuMI component YdiR (ydiR).